We begin with the raw amino-acid sequence, 201 residues long: NF-kappa-B inhibitor-interacting Ras-like protein (201 aa).

The segment at Asn-3 to Ala-201 is small GTPase-like. Position 16–23 (Gly-16–Thr-23) interacts with GTP. Residues Leu-40–Tyr-48 carry the Effector region motif. GTP-binding positions include Asp-67 to Leu-71 and Asn-127 to Ala-130.

This sequence belongs to the small GTPase superfamily. Ras family. KappaB-Ras subfamily. As to quaternary structure, interacts with NF-kappa-B inhibitor cactus.

Its function is as follows. Atypical Ras-like protein that may act as a regulator of NF-kappa-B activity, possibly by preventing the degradation of NF-kappa-B inhibitor cactus. This Drosophila melanogaster (Fruit fly) protein is NF-kappa-B inhibitor-interacting Ras-like protein (kappaB-Ras).